We begin with the raw amino-acid sequence, 172 residues long: Adenine phosphoribosyltransferase (172 aa).

This sequence belongs to the purine/pyrimidine phosphoribosyltransferase family. As to quaternary structure, homodimer.

Its subcellular location is the cytoplasm. The enzyme catalyses AMP + diphosphate = 5-phospho-alpha-D-ribose 1-diphosphate + adenine. It participates in purine metabolism; AMP biosynthesis via salvage pathway; AMP from adenine: step 1/1. Catalyzes a salvage reaction resulting in the formation of AMP, that is energically less costly than de novo synthesis. The polypeptide is Adenine phosphoribosyltransferase (Methanococcus maripaludis (strain C7 / ATCC BAA-1331)).